Reading from the N-terminus, the 276-residue chain is MSIDSLPPLREVIERHDLMPKKSLGQNFLFDLNLTSKIARQAGDLRDQPVIEVGPGPGGLTRALLAQGAYVTAIERDDRCLEALAEIAAHYPGRLRIIAGDALEQDFTALFPEGPKPRIVANLPYNVGTQLLLNWLLVEPWPPFYSSMTLMFQREVAERIVAKPDSDHYGRLGVLAGWRTQAKIAFDVPPQAFTPPPKVMSSVVHIVPRETPLPCRAEALGQITQAAFGQRRKMLRQSLKSIGGAALLEKMGIDGTRRAETLSVEEFVALANACLP.

Residues asparagine 27, leucine 29, glycine 54, glutamate 75, aspartate 101, and asparagine 122 each coordinate S-adenosyl-L-methionine.

This sequence belongs to the class I-like SAM-binding methyltransferase superfamily. rRNA adenine N(6)-methyltransferase family. RsmA subfamily.

Its subcellular location is the cytoplasm. The enzyme catalyses adenosine(1518)/adenosine(1519) in 16S rRNA + 4 S-adenosyl-L-methionine = N(6)-dimethyladenosine(1518)/N(6)-dimethyladenosine(1519) in 16S rRNA + 4 S-adenosyl-L-homocysteine + 4 H(+). Its function is as follows. Specifically dimethylates two adjacent adenosines (A1518 and A1519) in the loop of a conserved hairpin near the 3'-end of 16S rRNA in the 30S particle. May play a critical role in biogenesis of 30S subunits. This chain is Ribosomal RNA small subunit methyltransferase A, found in Brucella abortus biovar 1 (strain 9-941).